Reading from the N-terminus, the 611-residue chain is Cilia- and flagella-associated protein 100 (611 aa).

The span at 1–17 (MSEIPSTIVSKNMTNDK) shows a compositional bias: polar residues. Residues 1-57 (MSEIPSTIVSKNMTNDKNSLESMNISSSSSTEENPKKQARKNEEHGPDPSANPFHLS) form a disordered region. Over residues 20-32 (LESMNISSSSSTE) the composition is skewed to low complexity. Residues 33–47 (ENPKKQARKNEEHGP) show a composition bias toward basic and acidic residues. Coiled-coil stretches lie at residues 101-128 (SLRRQLQLEDKQEDLEARAEAEHQRAFR), 164-203 (ALDVKRREIQRLETLATKEEARLERAEKSLEKDAALFDEF), and 230-257 (LEIRDLTTQIVNIKSEISRFEDTLKHYK). 2 disordered regions span residues 287–323 (EVSEASKESSVNSTPGDKGPGIKGKASSMWAKEGQGT) and 338–380 (SPSY…GEEP). Low complexity predominate over residues 338–357 (SPSYLSSPQQGSQPSESSGG). Coiled-coil stretches lie at residues 393 to 432 (VFRELEEQNLSLIQNSQETEKTLEELSHTLKHTQIRMDRE) and 526 to 578 (QVKI…RGRT).

This sequence belongs to the CFAP100 family.

It is found in the cytoplasm. It localises to the cytoskeleton. The protein resides in the cilium axoneme. Its function is as follows. May play a role in ciliary/flagellar motility by regulating the assembly and the activity of axonemal inner dynein arm. This is Cilia- and flagella-associated protein 100 from Homo sapiens (Human).